A 212-amino-acid chain; its full sequence is Leucyl/phenylalanyl-tRNA--protein transferase (212 aa).

This sequence belongs to the L/F-transferase family.

The protein localises to the cytoplasm. It carries out the reaction N-terminal L-lysyl-[protein] + L-leucyl-tRNA(Leu) = N-terminal L-leucyl-L-lysyl-[protein] + tRNA(Leu) + H(+). The enzyme catalyses N-terminal L-arginyl-[protein] + L-leucyl-tRNA(Leu) = N-terminal L-leucyl-L-arginyl-[protein] + tRNA(Leu) + H(+). The catalysed reaction is L-phenylalanyl-tRNA(Phe) + an N-terminal L-alpha-aminoacyl-[protein] = an N-terminal L-phenylalanyl-L-alpha-aminoacyl-[protein] + tRNA(Phe). Functions in the N-end rule pathway of protein degradation where it conjugates Leu, Phe and, less efficiently, Met from aminoacyl-tRNAs to the N-termini of proteins containing an N-terminal arginine or lysine. In Flavobacterium johnsoniae (strain ATCC 17061 / DSM 2064 / JCM 8514 / BCRC 14874 / CCUG 350202 / NBRC 14942 / NCIMB 11054 / UW101) (Cytophaga johnsonae), this protein is Leucyl/phenylalanyl-tRNA--protein transferase.